Consider the following 92-residue polypeptide: Serine rich endogenous peptide 11 (92 aa).

The signal sequence occupies residues 1 to 29 (MENNTFSSKSINLLILLLLLCTFLCQTES). The segment at 50 to 92 (PNTDIGTPSSTSDRGGGGNGRRLMSQMDVGASSSGQGGGRNRH) is disordered. The segment covering 53-62 (DIGTPSSTSD) has biased composition (polar residues). Short sequence motifs (SCOOP motif) lie at residues 53 to 67 (DIGT…GGGG) and 75 to 89 (QMDV…GGGR). 2 short sequence motifs (sxS motif essential for MIK2 binding) span residues 59 to 61 (STS) and 81 to 83 (SSS).

The protein belongs to the serine rich endogenous peptide (SCOOP) phytocytokine family. Interacts with MIK2 (via extracellular leucine-rich repeat domain); this interaction triggers the formation of complex between MIK2 and the BAK1/SERK3 and SERK4 coreceptors, and subsequent BAK1 activation by phosphorylation. As to expression, mostly expressed in seedlings shoots and roots, and, to a lower extent, in leaves.

It is found in the cell membrane. It localises to the secreted. The protein resides in the extracellular space. The protein localises to the apoplast. Its function is as follows. Brassicaceae-specific phytocytokine (plant endogenous peptide released into the apoplast) perceived by MIK2 in a BAK1/SERK3 and SERK4 coreceptors-dependent manner, that modulates various physiological and antimicrobial processes including growth prevention and reactive oxygen species (ROS) response regulation. In Arabidopsis thaliana (Mouse-ear cress), this protein is Serine rich endogenous peptide 11.